The sequence spans 594 residues: Capsid vertex component 1 (594 aa).

Disordered regions lie at residues 52–77 (GRST…DAVG), 176–205 (NKRD…NGSD), 443–468 (ARRQ…SGPP), and 575–594 (GRQE…FDDL). The span at 61-76 (GDEDDAPASDDAEDAV) shows a compositional bias: acidic residues.

Belongs to the herpesviridae CVC1 protein family. Interacts (via C-terminus) with capsid vertex component 2/CVC2.

The protein localises to the virion. It localises to the host nucleus. Functionally, capsid vertex-specific component that plays a role during viral DNA encapsidation, assuring correct genome cleavage and presumably stabilizing capsids that contain full-length viral genomes. The chain is Capsid vertex component 1 from Homo sapiens (Human).